The chain runs to 428 residues: Serine--tRNA ligase (428 aa).

231–233 lines the L-serine pocket; that stretch reads TAE. Residues 262–264 and Val278 contribute to the ATP site; that span reads RRE. Position 285 (Glu285) interacts with L-serine. 349–352 is an ATP binding site; it reads EVSS. An L-serine-binding site is contributed by Ser384.

The protein belongs to the class-II aminoacyl-tRNA synthetase family. Type-1 seryl-tRNA synthetase subfamily. Homodimer. The tRNA molecule binds across the dimer.

The protein localises to the cytoplasm. It carries out the reaction tRNA(Ser) + L-serine + ATP = L-seryl-tRNA(Ser) + AMP + diphosphate + H(+). The enzyme catalyses tRNA(Sec) + L-serine + ATP = L-seryl-tRNA(Sec) + AMP + diphosphate + H(+). It functions in the pathway aminoacyl-tRNA biosynthesis; selenocysteinyl-tRNA(Sec) biosynthesis; L-seryl-tRNA(Sec) from L-serine and tRNA(Sec): step 1/1. In terms of biological role, catalyzes the attachment of serine to tRNA(Ser). Is also able to aminoacylate tRNA(Sec) with serine, to form the misacylated tRNA L-seryl-tRNA(Sec), which will be further converted into selenocysteinyl-tRNA(Sec). This Chlamydia trachomatis serovar A (strain ATCC VR-571B / DSM 19440 / HAR-13) protein is Serine--tRNA ligase.